A 212-amino-acid chain; its full sequence is Probable GTP-binding protein EngB (212 aa).

The 175-residue stretch at 25–199 (FGYEVAFAGR…WAKLDEWMEY (175 aa)) folds into the EngB-type G domain. Residues 33-40 (GRSNAGKS), 60-64 (GRTQL), 78-81 (DLPG), 145-148 (TKSD), and 178-180 (FSS) each bind GTP. 2 residues coordinate Mg(2+): serine 40 and threonine 62.

It belongs to the TRAFAC class TrmE-Era-EngA-EngB-Septin-like GTPase superfamily. EngB GTPase family. Requires Mg(2+) as cofactor.

Functionally, necessary for normal cell division and for the maintenance of normal septation. The sequence is that of Probable GTP-binding protein EngB from Hydrogenovibrio crunogenus (strain DSM 25203 / XCL-2) (Thiomicrospira crunogena).